A 381-amino-acid chain; its full sequence is Dual-specificity RNA methyltransferase RlmN (381 aa).

The Proton acceptor role is filled by glutamate 95. The Radical SAM core domain maps to 101–347 (EDDRGTLCVS…TTVRKTRGDD (247 aa)). Residues cysteine 108 and cysteine 352 are joined by a disulfide bond. Residues cysteine 115, cysteine 119, and cysteine 122 each contribute to the [4Fe-4S] cluster site. S-adenosyl-L-methionine is bound by residues 178 to 179 (GE), serine 210, 232 to 234 (SLH), and asparagine 309. The active-site S-methylcysteine intermediate is cysteine 352.

This sequence belongs to the radical SAM superfamily. RlmN family. [4Fe-4S] cluster serves as cofactor.

Its subcellular location is the cytoplasm. The enzyme catalyses adenosine(2503) in 23S rRNA + 2 reduced [2Fe-2S]-[ferredoxin] + 2 S-adenosyl-L-methionine = 2-methyladenosine(2503) in 23S rRNA + 5'-deoxyadenosine + L-methionine + 2 oxidized [2Fe-2S]-[ferredoxin] + S-adenosyl-L-homocysteine. It catalyses the reaction adenosine(37) in tRNA + 2 reduced [2Fe-2S]-[ferredoxin] + 2 S-adenosyl-L-methionine = 2-methyladenosine(37) in tRNA + 5'-deoxyadenosine + L-methionine + 2 oxidized [2Fe-2S]-[ferredoxin] + S-adenosyl-L-homocysteine. In terms of biological role, specifically methylates position 2 of adenine 2503 in 23S rRNA and position 2 of adenine 37 in tRNAs. m2A2503 modification seems to play a crucial role in the proofreading step occurring at the peptidyl transferase center and thus would serve to optimize ribosomal fidelity. This chain is Dual-specificity RNA methyltransferase RlmN, found in Bordetella petrii (strain ATCC BAA-461 / DSM 12804 / CCUG 43448).